Here is a 292-residue protein sequence, read N- to C-terminus: Probable serine/threonine-protein kinase FPV226 (292 aa).

The 279-residue stretch at 14 to 292 (WKIDKLIGCG…DLLRQLVNSL (279 aa)) folds into the Protein kinase domain. Residues 20–28 (IGCGGFGCV) and Lys-43 each bind ATP. Asp-147 serves as the catalytic Proton acceptor.

Belongs to the protein kinase superfamily. Ser/Thr protein kinase family. Poxviruses subfamily.

It catalyses the reaction L-seryl-[protein] + ATP = O-phospho-L-seryl-[protein] + ADP + H(+). It carries out the reaction L-threonyl-[protein] + ATP = O-phospho-L-threonyl-[protein] + ADP + H(+). This is Probable serine/threonine-protein kinase FPV226 from Vertebrata (FPV).